Reading from the N-terminus, the 368-residue chain is NAD(P)H-quinone oxidoreductase subunit 1, chloroplastic (368 aa).

9 helical membrane-spanning segments follow: residues 27–47, 97–117, 130–150, 166–186, 204–224, 249–269, 270–290, 305–325, and 348–368; these read FLWI…GVLV, WLFN…YLVI, IGVF…LMAG, AAQS…IALL, FLSW…IASL, YSGM…LVSS, LFVT…FSLF, VISI…FLFI, and FLLP…LFLL.

Belongs to the complex I subunit 1 family. As to quaternary structure, NDH is composed of at least 16 different subunits, 5 of which are encoded in the nucleus.

Its subcellular location is the plastid. It localises to the chloroplast thylakoid membrane. The enzyme catalyses a plastoquinone + NADH + (n+1) H(+)(in) = a plastoquinol + NAD(+) + n H(+)(out). It carries out the reaction a plastoquinone + NADPH + (n+1) H(+)(in) = a plastoquinol + NADP(+) + n H(+)(out). Its function is as follows. NDH shuttles electrons from NAD(P)H:plastoquinone, via FMN and iron-sulfur (Fe-S) centers, to quinones in the photosynthetic chain and possibly in a chloroplast respiratory chain. The immediate electron acceptor for the enzyme in this species is believed to be plastoquinone. Couples the redox reaction to proton translocation, and thus conserves the redox energy in a proton gradient. This chain is NAD(P)H-quinone oxidoreductase subunit 1, chloroplastic, found in Marchantia polymorpha (Common liverwort).